A 176-amino-acid polypeptide reads, in one-letter code: Peptide deformylase (176 aa).

The Fe cation site is built by Cys92 and His134. Glu135 is an active-site residue. Residue His138 participates in Fe cation binding.

Belongs to the polypeptide deformylase family. Fe(2+) serves as cofactor.

The catalysed reaction is N-terminal N-formyl-L-methionyl-[peptide] + H2O = N-terminal L-methionyl-[peptide] + formate. Functionally, removes the formyl group from the N-terminal Met of newly synthesized proteins. Requires at least a dipeptide for an efficient rate of reaction. N-terminal L-methionine is a prerequisite for activity but the enzyme has broad specificity at other positions. The polypeptide is Peptide deformylase (Acinetobacter baumannii (strain SDF)).